The sequence spans 162 residues: Succinate dehydrogenase assembly factor 2-A, mitochondrial (162 aa).

Belongs to the SDHAF2 family. As to quaternary structure, interacts with the flavoprotein subunit within the SDH catalytic dimer.

It is found in the mitochondrion matrix. Its function is as follows. Plays an essential role in the assembly of succinate dehydrogenase (SDH), an enzyme complex (also referred to as respiratory complex II) that is a component of both the tricarboxylic acid (TCA) cycle and the mitochondrial electron transport chain, and which couples the oxidation of succinate to fumarate with the reduction of ubiquinone (coenzyme Q) to ubiquinol. Required for flavinylation (covalent attachment of FAD) of the flavoprotein subunit of the SDH catalytic dimer. The sequence is that of Succinate dehydrogenase assembly factor 2-A, mitochondrial from Drosophila yakuba (Fruit fly).